The primary structure comprises 405 residues: tRNA N6-adenosine threonylcarbamoyltransferase, mitochondrial (405 aa).

The transit peptide at 1-19 (MAKYISNLSRIAVVRGRVS) directs the protein to the mitochondrion. His138 and His142 together coordinate a divalent metal cation. Substrate contacts are provided by residues 160-164 (LISGG), Asp193, Gly213, Glu217, 320-321 (SN), and Thr348. Asp349 lines the a divalent metal cation pocket.

This sequence belongs to the KAE1 / TsaD family. As to quaternary structure, monomer. Requires a divalent metal cation as cofactor.

Its subcellular location is the mitochondrion. The catalysed reaction is L-threonylcarbamoyladenylate + adenosine(37) in tRNA = N(6)-L-threonylcarbamoyladenosine(37) in tRNA + AMP + H(+). Functionally, required for the formation of a threonylcarbamoyl group on adenosine at position 37 (t(6)A37) in mitochondrial tRNAs that read codons beginning with adenine. Probably involved in the transfer of the threonylcarbamoyl moiety of threonylcarbamoyl-AMP (TC-AMP) to the N6 group of A37. Involved in mitochondrial genome maintenance. The protein is tRNA N6-adenosine threonylcarbamoyltransferase, mitochondrial of Xenopus tropicalis (Western clawed frog).